A 315-amino-acid polypeptide reads, in one-letter code: Protein ADP-ribosyltransferase (315 aa).

Residues 13–299 enclose the Deacetylase sirtuin-type domain; that stretch reads LMDEKTKQAE…TTALRNDSTT (287 aa). NAD(+) is bound by residues Ala40, 123 to 126, and Gln143; that span reads TNAD. 4 residues coordinate Zn(2+): Cys151, Cys155, Cys186, and Cys189. Residues 238–240, Asn264, Tyr268, and Ile285 contribute to the NAD(+) site; that span reads YTT.

Belongs to the sirtuin family. Class M subfamily. It depends on Zn(2+) as a cofactor.

The enzyme catalyses L-aspartyl-[protein] + NAD(+) = 4-O-(ADP-D-ribosyl)-L-aspartyl-[protein] + nicotinamide. With respect to regulation, is inhibited by Tenovin-6 in vitro, but not by nicotinamide. Catalyzes specifically the mono-ADP-ribosylation of GcvH-L (SAV0324). This activity is dependent on prior lipoylation of the target protein. May be involved in the modulation of the response to host-derived oxidative stress. In contrast to other sirtuin classes, lacks protein deacylase activity, being unable to catalyze delipoylation, debiotinylation, deacetylation and desuccinylation of proteins. The polypeptide is Protein ADP-ribosyltransferase (Staphylococcus aureus (strain Mu50 / ATCC 700699)).